Consider the following 143-residue polypeptide: Hemoglobin subunit alpha (143 aa).

Position 2 is an N-acetylserine (Ser2). Positions 2 to 143 constitute a Globin domain; sequence SLSDKDKSAV…VALALAEKYR (142 aa). Residue His60 coordinates O2. Residue His89 coordinates heme b.

Belongs to the globin family. As to quaternary structure, heterotetramer of two alpha chains and two beta chains. As to expression, red blood cells.

In terms of biological role, involved in oxygen transport from gills to the various peripheral tissues. In Pogonophryne scotti (Saddleback plunderfish), this protein is Hemoglobin subunit alpha (hba).